Consider the following 97-residue polypeptide: Large ribosomal subunit protein uL23 (97 aa).

Belongs to the universal ribosomal protein uL23 family. In terms of assembly, part of the 50S ribosomal subunit. Contacts protein L29, and trigger factor when it is bound to the ribosome.

Functionally, one of the early assembly proteins it binds 23S rRNA. One of the proteins that surrounds the polypeptide exit tunnel on the outside of the ribosome. Forms the main docking site for trigger factor binding to the ribosome. This Clostridium botulinum (strain ATCC 19397 / Type A) protein is Large ribosomal subunit protein uL23.